The following is a 1703-amino-acid chain: Mediator of RNA polymerase II transcription subunit 14 (1703 aa).

Residues 755-766 (LSQTADLATSSA) are compositionally biased toward polar residues. The tract at residues 755 to 781 (LSQTADLATSSAGPLLRKDQKPRKRSA) is disordered.

It belongs to the Mediator complex subunit 14 family. In terms of assembly, component of the Mediator complex. Interacts with CDKE-1, HDA19 and LUG. Interacts with PTAC12/HMR/PAP5 and PIF4. Expressed in roots, stems, developing embryos, young leaf primordia, shoot apical meristems, inflorescence meristems, tapetum in anthers, ovules and floral organ primordia, but not in mature organs.

It localises to the nucleus. Functionally, component of the Mediator complex, a coactivator involved in the regulated transcription of nearly all RNA polymerase II-dependent genes. Mediator functions as a bridge to convey information from gene-specific regulatory proteins to the basal RNA polymerase II transcription machinery. The Mediator complex, having a compact conformation in its free form, is recruited to promoters by direct interactions with regulatory proteins and serves for the assembly of a functional pre-initiation complex with RNA polymerase II and the general transcription factors. Binds to G-box (5'-CACGTG-3')-containing regions of target genes promoters (e.g. IAA29 and IAA19). Involved in defining the duration of cell proliferation. Element of a PIF4/HMR/MED14-dependent thermoresponsive process; required for thermomorphogenetic hypocotyl growth in response to daytime warm temperature elicitation by associating to the promoters of thermoresponsive growth-relevant genes (e.g. mainly involved in biosynthesis and signaling of the phytohormone auxin); this also process implies PIF4 and its transcriptional coactivator PTAC12/HMR/PAP5 to promote the expression of target genes. In Arabidopsis thaliana (Mouse-ear cress), this protein is Mediator of RNA polymerase II transcription subunit 14.